The chain runs to 350 residues: NADH-cytochrome b5 reductase 2 (350 aa).

Residues 43-63 (PLVLALGGVAGIGAWYGLGGF) form a helical membrane-spanning segment. One can recognise an FAD-binding FR-type domain in the interval 96–204 (DQFVEFTLKE…KGPIAKFAYK (109 aa)). 207 to 242 (EFESIGMIAGGSGITPMYQVIQDIASNPSDKTKVTL) provides a ligand contact to FAD.

This sequence belongs to the flavoprotein pyridine nucleotide cytochrome reductase family. It depends on FAD as a cofactor.

It is found in the mitochondrion outer membrane. The enzyme catalyses 2 Fe(III)-[cytochrome b5] + NADH = 2 Fe(II)-[cytochrome b5] + NAD(+) + H(+). In terms of biological role, may mediate the reduction of outer membrane cytochrome b5. This is NADH-cytochrome b5 reductase 2 (MCR1) from Mycosarcoma maydis (Corn smut fungus).